The sequence spans 404 residues: Probable tRNA sulfurtransferase (404 aa).

Residues 61 to 166 (QTLVTGLPKI…HDATYMMAQV (106 aa)) enclose the THUMP domain. ATP is bound by residues 184 to 185 (ML), 209 to 210 (HF), R266, G288, and Q297.

The protein belongs to the ThiI family.

The protein resides in the cytoplasm. It carries out the reaction [ThiI sulfur-carrier protein]-S-sulfanyl-L-cysteine + a uridine in tRNA + 2 reduced [2Fe-2S]-[ferredoxin] + ATP + H(+) = [ThiI sulfur-carrier protein]-L-cysteine + a 4-thiouridine in tRNA + 2 oxidized [2Fe-2S]-[ferredoxin] + AMP + diphosphate. The catalysed reaction is [ThiS sulfur-carrier protein]-C-terminal Gly-Gly-AMP + S-sulfanyl-L-cysteinyl-[cysteine desulfurase] + AH2 = [ThiS sulfur-carrier protein]-C-terminal-Gly-aminoethanethioate + L-cysteinyl-[cysteine desulfurase] + A + AMP + 2 H(+). It participates in cofactor biosynthesis; thiamine diphosphate biosynthesis. Its function is as follows. Catalyzes the ATP-dependent transfer of a sulfur to tRNA to produce 4-thiouridine in position 8 of tRNAs, which functions as a near-UV photosensor. Also catalyzes the transfer of sulfur to the sulfur carrier protein ThiS, forming ThiS-thiocarboxylate. This is a step in the synthesis of thiazole, in the thiamine biosynthesis pathway. The sulfur is donated as persulfide by IscS. This chain is Probable tRNA sulfurtransferase, found in Lysinibacillus sphaericus (strain C3-41).